Reading from the N-terminus, the 844-residue chain is MVSLTIDGKDITVAKETTILDAAALLGITIPTLCWLKKVSPTGACRVCAVEIEGVDRPMTACNTPVKDGIKVTTQSEKLSRIRQKIMELMLVNHPLDCPVCDAGGECDLQNACYGLGAAKQEYGAVLERRKIRYDWPLIESDPNRCILCEKCVKVDHEIVGCNAIRVVNRGEATIIDTVDGNPLNCEFCGNCVAACPTGTLISKPFKFRGRPWAFTTTPSVCPFCATGCQIEYHSRNGRVERVTSDDSTYNSGNLCINGRFGYSYINSPDRLAEPMVKGQKADWNTAMGTAATALKQIVASHGADAVAGFGSPRVTNEDNYLFQKLMRSAIGTGNIDSEARLGFAATQKVLREMLGIAGASTTIDAIDRATAVLVVGCDLNAEATGMEYRVIKAATKNNAKLVLAAMRDIKLKKFANSHLKYRPGNETLLINALTKAVLEEGLENKEFCSANISNLSDLTAALAGVSIADAAAATGVTEADLRAAARLVGGKKGVAVIFGAELMRGGNTDAVKALINLALILGATAGDTGGLFPVYEKTNIRGLLDMGVAPDHFPGHQTDGTTFEKAWGKKLPAAAGKDLWQIIEGIEQGSVKALYLLGCDPVASFPEGERIRKALEKLELLIVQDPFPGEAAKMAHVVFPSSVAAEKNGTFTTIDGRVQPLAKAVAPSGDAREDWDILTELYNRLTGESRIHSPAAVLDEVAALVPAYASVGRTGGTITAQPRSGGLALAPVSARAVAGSPTTLLVGTILYHSGTTTTWSKNNLEIIPKGYIEIHPNDAAKLGIAEGGKVRLSAGSVKVEGTAKITPRVQPGLLFAPSHFRGMNVNALLSRDGGVVPVTVEKA.

The region spanning 1 to 78 (MVSLTIDGKD…GIKVTTQSEK (78 aa)) is the 2Fe-2S ferredoxin-type domain. The [2Fe-2S] cluster site is built by Cys34, Cys45, Cys48, and Cys62. Positions 78–117 (KLSRIRQKIMELMLVNHPLDCPVCDAGGECDLQNACYGLG) constitute a 4Fe-4S His(Cys)3-ligated-type domain. Residues His94, Cys98, Cys101, Cys107, Cys146, Cys149, Cys152, Cys186, Cys189, Cys192, Cys196, Cys222, Cys225, Cys229, and Cys256 each coordinate [4Fe-4S] cluster. 2 consecutive 4Fe-4S ferredoxin-type domains span residues 137–168 (PLIE…IRVV) and 177–206 (DTVD…SKPF). The 4Fe-4S Mo/W bis-MGD-type domain occupies 215–270 (FTTTPSVCPFCATGCQIEYHSRNGRVERVTSDDSTYNSGNLCINGRFGYSYINSPD).

Heterotetramer with 2 beta subunits. [4Fe-4S] cluster serves as cofactor.

It is found in the cell inner membrane. Not regulated by FAD or FMN. In terms of biological role, the SfrAB enzymatic complex is probably involved in acetate metabolism and does not participate directly in the reduction of Fe(3+) chelates. May serve as a major route for NADP regeneration. This is NADPH-Fe(3+) oxidoreductase subunit alpha (sfrA) from Geobacter sulfurreducens (strain DL-1 / KN400).